Consider the following 434-residue polypeptide: Trigger factor (434 aa).

The PPIase FKBP-type domain maps to 160 to 245; that stretch reads DDKVKMNFIG…LTEVQAANLP (86 aa).

The protein belongs to the FKBP-type PPIase family. Tig subfamily.

Its subcellular location is the cytoplasm. It catalyses the reaction [protein]-peptidylproline (omega=180) = [protein]-peptidylproline (omega=0). Involved in protein export. Acts as a chaperone by maintaining the newly synthesized protein in an open conformation. Functions as a peptidyl-prolyl cis-trans isomerase. This is Trigger factor from Shewanella frigidimarina (strain NCIMB 400).